Here is a 592-residue protein sequence, read N- to C-terminus: Aspartate--tRNA(Asp/Asn) ligase (592 aa).

Residue Glu177 participates in L-aspartate binding. Residues 201 to 204 (QLFK) form an aspartate region. Arg223 contributes to the L-aspartate binding site. ATP is bound by residues 223-225 (RDE) and Gln232. L-aspartate is bound at residue His451. Glu485 serves as a coordination point for ATP. Position 492 (Arg492) interacts with L-aspartate. 537 to 540 (GLDR) serves as a coordination point for ATP.

Belongs to the class-II aminoacyl-tRNA synthetase family. Type 1 subfamily. In terms of assembly, homodimer.

Its subcellular location is the cytoplasm. The enzyme catalyses tRNA(Asx) + L-aspartate + ATP = L-aspartyl-tRNA(Asx) + AMP + diphosphate. Aspartyl-tRNA synthetase with relaxed tRNA specificity since it is able to aspartylate not only its cognate tRNA(Asp) but also tRNA(Asn). Reaction proceeds in two steps: L-aspartate is first activated by ATP to form Asp-AMP and then transferred to the acceptor end of tRNA(Asp/Asn). The polypeptide is Aspartate--tRNA(Asp/Asn) ligase (Bacillus subtilis (strain 168)).